The primary structure comprises 467 residues: Serine/threonine-protein kinase US3 homolog (467 aa).

The segment at 64–155 (GPEVAPPART…PAGGVTREEA (92 aa)) is disordered. A compositionally biased stretch (basic and acidic residues) spans 99 to 111 (NERRAATGDEKES). Residues 117–144 (NESESESESESESESGADDGDWDDDDDA) are compositionally biased toward acidic residues. Residues 164–462 (FRIIRRLTPG…AAELLEHPVF (299 aa)) enclose the Protein kinase domain. Residues 170-178 (LTPGSEGRV) and Lys194 contribute to the ATP site. Asp279 (proton acceptor) is an active-site residue.

It belongs to the protein kinase superfamily. Ser/Thr protein kinase family. Phosphorylated by UL13 homolog; this phosphorylation regulates subsequent phosphorylation of UL31 and UL34 homologs by US3. Autophosphorylated.

The protein localises to the host cytoplasm. It is found in the host nucleus. It catalyses the reaction L-seryl-[protein] + ATP = O-phospho-L-seryl-[protein] + ADP + H(+). It carries out the reaction L-threonyl-[protein] + ATP = O-phospho-L-threonyl-[protein] + ADP + H(+). Its function is as follows. Multifunctional serine/threonine kinase that plays a role in several processes including egress of virus particles from the nucleus, modulation of the actin cytoskeleton and inhibition of apoptosis. Phosphorylates UL31 and UL34 homologs, two critical regulators of capsid budding from nucleus to endoplasmic reticulum, thereby facilitating virion egress. Modulates and redistributes host components of the nuclear envelope, including LMNA, emerin/EMD and the nuclear matrix protein MATR3. Phosphorylates envelope glycoprotein B (gB), probably to direct it to the cell surface. Promotes virus intracellular spread by restructuring host cell cytoskeleton. Blocks host apoptosis to extend cell survival and allow efficient viral replication. Promotes viral gene expression by phosphorylating host HDAC2 to reduce viral genome silencing. The polypeptide is Serine/threonine-protein kinase US3 homolog (Bos taurus (Bovine)).